A 141-amino-acid polypeptide reads, in one-letter code: Hemoglobin subunit alpha (141 aa).

The Globin domain occupies 1-141 (VLSPADKTNV…VSTVLTSKYR (141 aa)). Ser-3 carries the phosphoserine modification. Lys-7 is modified (N6-succinyllysine). Residue Thr-8 is modified to Phosphothreonine. Lys-11 bears the N6-succinyllysine mark. At Lys-16 the chain carries N6-acetyllysine; alternate. Lys-16 carries the N6-succinyllysine; alternate modification. Tyr-24 carries the phosphotyrosine modification. Ser-35 is modified (phosphoserine). An N6-succinyllysine modification is found at Lys-40. His-58 lines the O2 pocket. His-87 serves as a coordination point for heme b. Phosphoserine is present on Ser-102. Phosphothreonine is present on Thr-108. Phosphoserine occurs at positions 124 and 131. Phosphothreonine occurs at positions 134 and 137. Phosphoserine is present on Ser-138.

It belongs to the globin family. Heterotetramer of two alpha chains and two beta chains. As to expression, red blood cells.

In terms of biological role, involved in oxygen transport from the lung to the various peripheral tissues. Hemopressin acts as an antagonist peptide of the cannabinoid receptor CNR1. Hemopressin-binding efficiently blocks cannabinoid receptor CNR1 and subsequent signaling. This Cynopterus sphinx (Indian short-nosed fruit bat) protein is Hemoglobin subunit alpha (HBA).